Reading from the N-terminus, the 66-residue chain is uncharacterized protein (66 aa).

This is an uncharacterized protein from Escherichia coli O157:H7.